A 475-amino-acid polypeptide reads, in one-letter code: Alpha,alpha-trehalose-phosphate synthase [UDP-forming] (475 aa).

2 residues coordinate D-glucose 6-phosphate: tyrosine 93 and aspartate 147. Residues arginine 285 and lysine 290 each coordinate UDP. Positions 285 and 290 each coordinate UDP-alpha-D-glucose. Arginine 323 contacts D-glucose 6-phosphate. 384-392 contacts UDP-alpha-D-glucose; sequence DGMNLVSYE. A UDP-binding site is contributed by 388–392; that stretch reads LVSYE.

Belongs to the glycosyltransferase 20 family.

It carries out the reaction D-glucose 6-phosphate + UDP-alpha-D-glucose = alpha,alpha-trehalose 6-phosphate + UDP + H(+). It participates in carbohydrate biosynthesis. Its function is as follows. Synthase catalytic subunit of the trehalose synthase complex that catalyzes the production of trehalose from glucose-6-phosphate and UDP-alpha-D-glucose in a two step process. The chain is Alpha,alpha-trehalose-phosphate synthase [UDP-forming] from Pichia angusta (Yeast).